The following is a 539-amino-acid chain: Glucose-6-phosphate isomerase (539 aa).

E340 acts as the Proton donor in catalysis. Catalysis depends on residues H371 and K500.

Belongs to the GPI family.

It localises to the cytoplasm. The enzyme catalyses alpha-D-glucose 6-phosphate = beta-D-fructose 6-phosphate. Its pathway is carbohydrate biosynthesis; gluconeogenesis. It participates in carbohydrate degradation; glycolysis; D-glyceraldehyde 3-phosphate and glycerone phosphate from D-glucose: step 2/4. In terms of biological role, catalyzes the reversible isomerization of glucose-6-phosphate to fructose-6-phosphate. In Ruegeria pomeroyi (strain ATCC 700808 / DSM 15171 / DSS-3) (Silicibacter pomeroyi), this protein is Glucose-6-phosphate isomerase.